Reading from the N-terminus, the 554-residue chain is Solute carrier family 22 member 22 (554 aa).

The Cytoplasmic portion of the chain corresponds to methionine 1–arginine 15. The helical transmembrane segment at phenylalanine 16–valine 36 threads the bilayer. Topologically, residues leucine 37–lysine 144 are extracellular. An N-linked (GlcNAc...) asparagine glycan is attached at asparagine 39. The helical transmembrane segment at tyrosine 145–isoleucine 165 threads the bilayer. Residues serine 166–lysine 172 are Cytoplasmic-facing. The chain crosses the membrane as a helical span at residues proline 173–proline 193. N-linked (GlcNAc...) asparagine glycosylation occurs at asparagine 194. The Extracellular segment spans residues asparagine 194–cysteine 199. A helical transmembrane segment spans residues valine 200 to valine 220. Topologically, residues leucine 221–threonine 231 are cytoplasmic. The chain crosses the membrane as a helical span at residues isoleucine 232–tyrosine 252. The Extracellular segment spans residues valine 253 to histidine 258. A helical transmembrane segment spans residues leucine 259–proline 279. The Cytoplasmic portion of the chain corresponds to glutamate 280–lysine 347. The chain crosses the membrane as a helical span at residues isoleucine 348–leucine 368. Topologically, residues aspartate 369 to asparagine 376 are extracellular. Residues methionine 377–phenylalanine 397 form a helical membrane-spanning segment. Topologically, residues threonine 398 to arginine 405 are cytoplasmic. A helical transmembrane segment spans residues proline 406–serine 426. The Extracellular portion of the chain corresponds to glutamate 427–threonine 434. A helical transmembrane segment spans residues isoleucine 435–isoleucine 455. Residues asparagine 456–threonine 466 lie on the Cytoplasmic side of the membrane. A helical membrane pass occupies residues leucine 467–alanine 487. Over threonine 488 to tyrosine 491 the chain is Extracellular. A helical membrane pass occupies residues phenylalanine 492–leucine 512. Residues phenylalanine 513–cysteine 554 are Cytoplasmic-facing.

Belongs to the major facilitator (TC 2.A.1) superfamily. Organic cation transporter (TC 2.A.1.19) family. Specifically expressed in kidney where it is found in proximal convoluted tubules (at protein level). Colocalizes with the prostaglandin-inactivating enzyme HPGD in kidney (at protein level). Not detected in other tissues tested.

The protein localises to the basolateral cell membrane. Functionally, sodium-independent organic anion transporter which exhibits high specificity for a subset of prostaglandins including prostaglandin E2 (PGE2), prostaglandin E1 (PGE1), prostaglandin F2-alpha (PGF2-alpha) and prostaglandin D2 (PGD2). The sequence is that of Solute carrier family 22 member 22 from Mus musculus (Mouse).